Reading from the N-terminus, the 284-residue chain is 4-diphosphocytidyl-2-C-methyl-D-erythritol kinase (284 aa).

Residue Lys14 is part of the active site. 98-108 (PMGGGLGGGSS) lines the ATP pocket. The active site involves Asp140.

The protein belongs to the GHMP kinase family. IspE subfamily.

The enzyme catalyses 4-CDP-2-C-methyl-D-erythritol + ATP = 4-CDP-2-C-methyl-D-erythritol 2-phosphate + ADP + H(+). Its pathway is isoprenoid biosynthesis; isopentenyl diphosphate biosynthesis via DXP pathway; isopentenyl diphosphate from 1-deoxy-D-xylulose 5-phosphate: step 3/6. Catalyzes the phosphorylation of the position 2 hydroxy group of 4-diphosphocytidyl-2C-methyl-D-erythritol. The sequence is that of 4-diphosphocytidyl-2-C-methyl-D-erythritol kinase from Shewanella halifaxensis (strain HAW-EB4).